The primary structure comprises 379 residues: MFRGAVMKAMLLGILAAFFFSFTFLLNRMMEVEGGSWLFSASMRFLFMLPFLLVIVYIRTGFKALWLSVRKNPFPWFGWSFVGFVLFYAPLTFASGYAPGWLVAGTFQLTIVAGLLLSPLFYHVSADGSRIRQTIPLRSLFSSAVIFVGVVFIQAQHATSISGNLLFSVAPVIVAAFAYPLGNIKMMELTDGCIDTFSRVLGMTVMTTPVWVVLFAIGTIQHGLPTTSQTGQALIVAISSGIIATLLFFYATDRTRKKPNHLLPGRSTQSGEGRVRTHIGASLFASIVSFSTCASRHWTYCHWHGASQLPHTENSTAKFGKSEAKQEWLTLVLEKFWTRQIQAKNPNAVRTFPISLSDFGDSCKPHLAVFFAEMKSWDK.

This is an uncharacterized protein from Shouchella clausii (Alkalihalobacillus clausii).